The primary structure comprises 54 residues: Large ribosomal subunit protein bL33B (54 aa).

It belongs to the bacterial ribosomal protein bL33 family.

This is Large ribosomal subunit protein bL33B (rpmG2) from Streptomyces coelicolor (strain ATCC BAA-471 / A3(2) / M145).